Consider the following 519-residue polypeptide: Exodeoxyribonuclease 7 large subunit (519 aa).

The tract at residues 500 to 519 (VGRGKTRKPKEEPPAQGSLL) is disordered.

It belongs to the XseA family. In terms of assembly, heterooligomer composed of large and small subunits.

Its subcellular location is the cytoplasm. The enzyme catalyses Exonucleolytic cleavage in either 5'- to 3'- or 3'- to 5'-direction to yield nucleoside 5'-phosphates.. Bidirectionally degrades single-stranded DNA into large acid-insoluble oligonucleotides, which are then degraded further into small acid-soluble oligonucleotides. This chain is Exodeoxyribonuclease 7 large subunit, found in Cereibacter sphaeroides (strain KD131 / KCTC 12085) (Rhodobacter sphaeroides).